Consider the following 304-residue polypeptide: Small ribosomal subunit protein uS3 (304 aa).

Positions 17 to 86 (IDEFFAEELG…DPQVDVQEVD (70 aa)) constitute a KH type-2 domain. A disordered region spans residues 216–304 (LLEGEPEDSE…DEMDEEGDDE (89 aa)).

This sequence belongs to the universal ribosomal protein uS3 family. As to quaternary structure, part of the 30S ribosomal subunit.

Its function is as follows. Binds the lower part of the 30S subunit head. The polypeptide is Small ribosomal subunit protein uS3 (Haloarcula marismortui (strain ATCC 43049 / DSM 3752 / JCM 8966 / VKM B-1809) (Halobacterium marismortui)).